The following is a 218-amino-acid chain: OPA3-like protein (218 aa).

A coiled-coil region spans residues Asn-129 to Asn-179. The segment at Thr-175–Gly-218 is disordered. Polar residues predominate over residues Leu-176 to Ala-189. Residues Glu-194–His-206 are compositionally biased toward basic and acidic residues. Polar residues predominate over residues Pro-208 to Gly-218.

This sequence belongs to the OPA3 family.

The polypeptide is OPA3-like protein (Schizosaccharomyces pombe (strain 972 / ATCC 24843) (Fission yeast)).